A 178-amino-acid polypeptide reads, in one-letter code: ATP-dependent protease subunit HslV (178 aa).

The active site involves Thr7. Residues Gly162, Cys165, and Thr168 each coordinate Na(+).

It belongs to the peptidase T1B family. HslV subfamily. As to quaternary structure, a double ring-shaped homohexamer of HslV is capped on each side by a ring-shaped HslU homohexamer. The assembly of the HslU/HslV complex is dependent on binding of ATP.

Its subcellular location is the cytoplasm. The enzyme catalyses ATP-dependent cleavage of peptide bonds with broad specificity.. Allosterically activated by HslU binding. Its function is as follows. Protease subunit of a proteasome-like degradation complex believed to be a general protein degrading machinery. This is ATP-dependent protease subunit HslV from Cupriavidus necator (strain ATCC 17699 / DSM 428 / KCTC 22496 / NCIMB 10442 / H16 / Stanier 337) (Ralstonia eutropha).